The chain runs to 272 residues: Shikimate dehydrogenase (NADP(+)) (272 aa).

Shikimate contacts are provided by residues 14-16 and threonine 61; that span reads SKS. Catalysis depends on lysine 65, which acts as the Proton acceptor. Glutamate 77 contacts NADP(+). Positions 86 and 102 each coordinate shikimate. NADP(+) is bound by residues 126–130, 149–154, and methionine 212; these read GAGGA and NRTADK. A shikimate-binding site is contributed by tyrosine 214. Glycine 237 contacts NADP(+).

It belongs to the shikimate dehydrogenase family. Homodimer.

The catalysed reaction is shikimate + NADP(+) = 3-dehydroshikimate + NADPH + H(+). The protein operates within metabolic intermediate biosynthesis; chorismate biosynthesis; chorismate from D-erythrose 4-phosphate and phosphoenolpyruvate: step 4/7. In terms of biological role, involved in the biosynthesis of the chorismate, which leads to the biosynthesis of aromatic amino acids. Catalyzes the reversible NADPH linked reduction of 3-dehydroshikimate (DHSA) to yield shikimate (SA). This Glaesserella parasuis serovar 5 (strain SH0165) (Haemophilus parasuis) protein is Shikimate dehydrogenase (NADP(+)).